The chain runs to 813 residues: Ribonuclease R (813 aa).

The RNB domain occupies 260–587; it reads RVDLRDLPLV…LHRAIKYLLA (328 aa). Lys-544 is subject to N6-acetyllysine. The region spanning 644–725 is the S1 motif domain; that stretch reads GNVFKGVISS…DERKIDFSLI (82 aa). Positions 733 to 813 are disordered; the sequence is NVGKTAREKA…KRAAKKKVAE (81 aa). Basic and acidic residues-rich tracts occupy residues 737–749 and 761–774; these read TAREKAKKGDAGK and VNFEPDSAFRGEKK. The span at 775–791 shows a compositional bias: basic residues; that stretch reads TKPKAAKKDARKAKKPS. Low complexity predominate over residues 792–801; the sequence is AKTQKIAAAT. Residues 802 to 813 are compositionally biased toward basic residues; that stretch reads KAKRAAKKKVAE.

It belongs to the RNR ribonuclease family. RNase R subfamily. In terms of assembly, monomer.

Its subcellular location is the cytoplasm. It catalyses the reaction Exonucleolytic cleavage in the 3'- to 5'-direction to yield nucleoside 5'-phosphates.. In terms of biological role, 3'-5' exoribonuclease that releases 5'-nucleoside monophosphates and is involved in maturation of structured RNAs. Required for the expression of virulence genes on the large plasmid of S.flexneri at the post-transcriptional level. In Shigella flexneri, this protein is Ribonuclease R.